A 186-amino-acid polypeptide reads, in one-letter code: TATA-box-binding protein (186 aa).

Repeat copies occupy residues 10-86 and 101-179.

It belongs to the TBP family.

General factor that plays a role in the activation of archaeal genes transcribed by RNA polymerase. Binds specifically to the TATA box promoter element which lies close to the position of transcription initiation. The sequence is that of TATA-box-binding protein from Haloarcula marismortui (strain ATCC 43049 / DSM 3752 / JCM 8966 / VKM B-1809) (Halobacterium marismortui).